A 166-amino-acid chain; its full sequence is Large ribosomal subunit protein uL10 (166 aa).

Belongs to the universal ribosomal protein uL10 family. In terms of assembly, part of the ribosomal stalk of the 50S ribosomal subunit. The N-terminus interacts with L11 and the large rRNA to form the base of the stalk. The C-terminus forms an elongated spine to which L12 dimers bind in a sequential fashion forming a multimeric L10(L12)X complex.

In terms of biological role, forms part of the ribosomal stalk, playing a central role in the interaction of the ribosome with GTP-bound translation factors. In Streptococcus equi subsp. zooepidemicus (strain MGCS10565), this protein is Large ribosomal subunit protein uL10.